The sequence spans 229 residues: Potassium/proton antiporter CemA (229 aa).

The next 3 membrane-spanning stretches (helical) occupy residues 7–27 (FTPL…SFSV), 107–127 (ILHF…SILG), and 189–209 (IISG…KYWI).

Belongs to the CemA family.

It localises to the plastid. It is found in the chloroplast inner membrane. The enzyme catalyses K(+)(in) + H(+)(out) = K(+)(out) + H(+)(in). Functionally, contributes to K(+)/H(+) antiport activity by supporting proton efflux to control proton extrusion and homeostasis in chloroplasts in a light-dependent manner to modulate photosynthesis. Prevents excessive induction of non-photochemical quenching (NPQ) under continuous-light conditions. Indirectly promotes efficient inorganic carbon uptake into chloroplasts. The sequence is that of Potassium/proton antiporter CemA from Atropa belladonna (Belladonna).